The sequence spans 223 residues: Putative N-acetylmannosamine-6-phosphate 2-epimerase (223 aa).

The protein belongs to the NanE family.

It catalyses the reaction an N-acyl-D-glucosamine 6-phosphate = an N-acyl-D-mannosamine 6-phosphate. It functions in the pathway amino-sugar metabolism; N-acetylneuraminate degradation; D-fructose 6-phosphate from N-acetylneuraminate: step 3/5. Its function is as follows. Converts N-acetylmannosamine-6-phosphate (ManNAc-6-P) to N-acetylglucosamine-6-phosphate (GlcNAc-6-P). The polypeptide is Putative N-acetylmannosamine-6-phosphate 2-epimerase (Staphylococcus haemolyticus (strain JCSC1435)).